The chain runs to 100 residues: Large ribosomal subunit protein uL23 (100 aa).

It belongs to the universal ribosomal protein uL23 family. As to quaternary structure, part of the 50S ribosomal subunit. Contacts protein L29, and trigger factor when it is bound to the ribosome.

In terms of biological role, one of the early assembly proteins it binds 23S rRNA. One of the proteins that surrounds the polypeptide exit tunnel on the outside of the ribosome. Forms the main docking site for trigger factor binding to the ribosome. The polypeptide is Large ribosomal subunit protein uL23 (Thermotoga neapolitana (strain ATCC 49049 / DSM 4359 / NBRC 107923 / NS-E)).